The chain runs to 210 residues: Ribosomal RNA small subunit methyltransferase G (210 aa).

Residues glycine 76, leucine 81, 127-128 (VE), and arginine 142 contribute to the S-adenosyl-L-methionine site.

It belongs to the methyltransferase superfamily. RNA methyltransferase RsmG family.

It is found in the cytoplasm. The enzyme catalyses guanosine(527) in 16S rRNA + S-adenosyl-L-methionine = N(7)-methylguanosine(527) in 16S rRNA + S-adenosyl-L-homocysteine. In terms of biological role, specifically methylates the N7 position of guanine in position 527 of 16S rRNA. The protein is Ribosomal RNA small subunit methyltransferase G of Vibrio cholerae serotype O1 (strain ATCC 39541 / Classical Ogawa 395 / O395).